The sequence spans 245 residues: 4-hydroxy-tetrahydrodipicolinate reductase (245 aa).

NAD(+) contacts are provided by residues 7-12 (GAKGKV), 75-77 (GTT), and 102-105 (APNF). His132 functions as the Proton donor/acceptor in the catalytic mechanism. A (S)-2,3,4,5-tetrahydrodipicolinate-binding site is contributed by His133. Lys136 serves as the catalytic Proton donor. 142–143 (GT) contributes to the (S)-2,3,4,5-tetrahydrodipicolinate binding site.

Belongs to the DapB family.

The protein resides in the cytoplasm. The enzyme catalyses (S)-2,3,4,5-tetrahydrodipicolinate + NAD(+) + H2O = (2S,4S)-4-hydroxy-2,3,4,5-tetrahydrodipicolinate + NADH + H(+). The catalysed reaction is (S)-2,3,4,5-tetrahydrodipicolinate + NADP(+) + H2O = (2S,4S)-4-hydroxy-2,3,4,5-tetrahydrodipicolinate + NADPH + H(+). It functions in the pathway amino-acid biosynthesis; L-lysine biosynthesis via DAP pathway; (S)-tetrahydrodipicolinate from L-aspartate: step 4/4. Its function is as follows. Catalyzes the conversion of 4-hydroxy-tetrahydrodipicolinate (HTPA) to tetrahydrodipicolinate. This is 4-hydroxy-tetrahydrodipicolinate reductase from Mycobacterium sp. (strain JLS).